Reading from the N-terminus, the 147-residue chain is MYFEEGRLFFIKSQFNGRVLDVEDGSTEDDANIIVYTQKYEDCLNQLWRYENGYFINAKSAKVLDIRGGEMQPESQIIQYAQKMVEEAANQRWAIDEDGYIFCEARPDLVLDIQGAEDEDCVPVILYERREGEVSANQRWELVPFEG.

The Ricin B-type lectin domain occupies 4-143; that stretch reads EEGRLFFIKS…VSANQRWELV (140 aa).

It belongs to the ribosome-inactivating protein family. Type 1 RIP subfamily.

Its subcellular location is the secreted. It carries out the reaction Endohydrolysis of the N-glycosidic bond at one specific adenosine on the 28S rRNA.. N-glycosylase that inhibits protein synthesis in the host by depurinating ribosomal rRNA, and thus acts as a ribosomal inactivating protein (RIP). Promotes vascular permeability in the host and induces necrosis and apoptosis of host alveolar epithelial cells. This chain is Mucoricin, found in Rhizopus delemar (strain RA 99-880 / ATCC MYA-4621 / FGSC 9543 / NRRL 43880) (Mucormycosis agent).